Reading from the N-terminus, the 283-residue chain is 4-diphosphocytidyl-2-C-methyl-D-erythritol kinase (283 aa).

K9 is a catalytic residue. 93-103 (PIAAGLAGGSS) serves as a coordination point for ATP. D135 is an active-site residue.

The protein belongs to the GHMP kinase family. IspE subfamily.

It carries out the reaction 4-CDP-2-C-methyl-D-erythritol + ATP = 4-CDP-2-C-methyl-D-erythritol 2-phosphate + ADP + H(+). It functions in the pathway isoprenoid biosynthesis; isopentenyl diphosphate biosynthesis via DXP pathway; isopentenyl diphosphate from 1-deoxy-D-xylulose 5-phosphate: step 3/6. Its function is as follows. Catalyzes the phosphorylation of the position 2 hydroxy group of 4-diphosphocytidyl-2C-methyl-D-erythritol. This Macrococcus caseolyticus (strain JCSC5402) (Macrococcoides caseolyticum) protein is 4-diphosphocytidyl-2-C-methyl-D-erythritol kinase.